Consider the following 167-residue polypeptide: NAD(P)H-quinone oxidoreductase subunit I, chloroplastic (167 aa).

4Fe-4S ferredoxin-type domains are found at residues Gly-55 to Lys-84 and Leu-95 to Glu-124. Cys-64, Cys-67, Cys-70, Cys-74, Cys-104, Cys-107, Cys-110, and Cys-114 together coordinate [4Fe-4S] cluster.

This sequence belongs to the complex I 23 kDa subunit family. NDH is composed of at least 16 different subunits, 5 of which are encoded in the nucleus. Requires [4Fe-4S] cluster as cofactor.

It is found in the plastid. Its subcellular location is the chloroplast thylakoid membrane. It carries out the reaction a plastoquinone + NADH + (n+1) H(+)(in) = a plastoquinol + NAD(+) + n H(+)(out). The catalysed reaction is a plastoquinone + NADPH + (n+1) H(+)(in) = a plastoquinol + NADP(+) + n H(+)(out). NDH shuttles electrons from NAD(P)H:plastoquinone, via FMN and iron-sulfur (Fe-S) centers, to quinones in the photosynthetic chain and possibly in a chloroplast respiratory chain. The immediate electron acceptor for the enzyme in this species is believed to be plastoquinone. Couples the redox reaction to proton translocation, and thus conserves the redox energy in a proton gradient. The protein is NAD(P)H-quinone oxidoreductase subunit I, chloroplastic of Aethionema cordifolium (Lebanon stonecress).